A 409-amino-acid chain; its full sequence is Elongation factor Tu (409 aa).

The tr-type G domain occupies 10–214 (KPHANIGTIG…EVDAYIPTPE (205 aa)). The G1 stretch occupies residues 19-26 (GHVDHGKT). 19-26 (GHVDHGKT) contacts GTP. A Mg(2+)-binding site is contributed by Thr26. Residues 60–64 (GITIN) are G2. The segment at 81-84 (DCPG) is G3. GTP-binding positions include 81-85 (DCPGH) and 136-139 (NKED). The interval 136–139 (NKED) is G4. Residues 174–176 (SAL) form a G5 region.

It belongs to the TRAFAC class translation factor GTPase superfamily. Classic translation factor GTPase family. EF-Tu/EF-1A subfamily. As to quaternary structure, monomer.

It localises to the cytoplasm. The enzyme catalyses GTP + H2O = GDP + phosphate + H(+). Its function is as follows. GTP hydrolase that promotes the GTP-dependent binding of aminoacyl-tRNA to the A-site of ribosomes during protein biosynthesis. In Synechococcus elongatus (strain ATCC 33912 / PCC 7942 / FACHB-805) (Anacystis nidulans R2), this protein is Elongation factor Tu.